Reading from the N-terminus, the 180-residue chain is Magnetosome protein MamS (180 aa).

At 1 to 21 the chain is on the cytoplasmic side; sequence MDFRPDQVVARIRGAVEGALT. Residues 22 to 42 form a helical membrane-spanning segment; sequence AQSVLGIGGALVLILVVIALL. Residues 43–180 are Lumenal-facing; sequence PDRFTRGEGK…EGLALWMTVQ (138 aa).

It belongs to the magnetosome MamS family.

The protein resides in the magnetosome membrane. May play a role in magnetite crystal growth and size. In Magnetospirillum gryphiswaldense (strain DSM 6361 / JCM 21280 / NBRC 15271 / MSR-1), this protein is Magnetosome protein MamS.